Here is a 406-residue protein sequence, read N- to C-terminus: Argininosuccinate synthase (406 aa).

Residues alanine 13–serine 21 and alanine 40 contribute to the ATP site. L-citrulline contacts are provided by tyrosine 91 and serine 96. Residue glycine 121 participates in ATP binding. 3 residues coordinate L-aspartate: threonine 123, asparagine 127, and aspartate 128. Position 127 (asparagine 127) interacts with L-citrulline. L-citrulline-binding residues include arginine 131, serine 182, serine 191, glutamate 267, and tyrosine 279.

It belongs to the argininosuccinate synthase family. Type 1 subfamily. As to quaternary structure, homotetramer.

The protein localises to the cytoplasm. It carries out the reaction L-citrulline + L-aspartate + ATP = 2-(N(omega)-L-arginino)succinate + AMP + diphosphate + H(+). The protein operates within amino-acid biosynthesis; L-arginine biosynthesis; L-arginine from L-ornithine and carbamoyl phosphate: step 2/3. This is Argininosuccinate synthase from Brucella suis biovar 1 (strain 1330).